The primary structure comprises 1192 residues: Chromosome partition protein Smc (1192 aa).

31–38 is an ATP binding site; that stretch reads PNGSGKSN. Coiled coils occupy residues 164 to 197, 234 to 292, 333 to 369, and 396 to 464; these read AGIS…VDEV, LTLS…RSEL, SAIA…RDVE, and EHEA…DAKV. The region spanning 522–636 is the SMC hinge domain; that stretch reads KDLVGIVADC…LVDTLATAIG (115 aa). Coiled-coil stretches lie at residues 676-736, 772-902, and 986-1030; these read RSEL…AKLH, ELAV…EREA, and GSVN…INAD.

This sequence belongs to the SMC family. Homodimer.

The protein localises to the cytoplasm. In terms of biological role, required for chromosome condensation and partitioning. This Rhodopirellula baltica (strain DSM 10527 / NCIMB 13988 / SH1) protein is Chromosome partition protein Smc.